Here is a 282-residue protein sequence, read N- to C-terminus: MIRIGAHMPIGGGFKRVPKETYEIGGNAFQIFPHNPRQWKANLPKEEDIKLFKEGIKKYKIDPEAMLCHSGYLINIASPNIETWNKSLELLILEMKICSTLGIKYLNIHPGSHLKSGVENGINQILKALNTAMEKEKNTFILLENVTKKGGNIGSTLEELKLIIDKAKFPDRLGITIDTCHAFDAGYDITNKEKLNEFLNKIDKYFSLEKLKFIHLNDSKNDLGSNKDRHENIGKGKIGSEGLKVFISHPLIQKIPWVLETPGDNDVHKKDIQEVLKILEVK.

Residues H69, H109, E144, D178, H181, H215, D228, H230, and E260 each coordinate Zn(2+).

This sequence belongs to the AP endonuclease 2 family. The cofactor is Zn(2+).

It catalyses the reaction Endonucleolytic cleavage to 5'-phosphooligonucleotide end-products.. Its function is as follows. Endonuclease IV plays a role in DNA repair. It cleaves phosphodiester bonds at apurinic or apyrimidinic (AP) sites, generating a 3'-hydroxyl group and a 5'-terminal sugar phosphate. This Thermosipho africanus (strain TCF52B) protein is Probable endonuclease 4.